The following is a 175-amino-acid chain: NADH-ubiquinone oxidoreductase chain 6 (175 aa).

5 helical membrane-spanning segments follow: residues 1–21, 26–46, 47–67, 87–107, and 152–172; these read MMYMVFLLSVAFVISFIGFSS, IYGGLGLIVGGGVGCGIVMGL, GGSFLGLMVFLVYLGGMLVVF, VILSALFVGLLVEVAMIVWMI, and WLVILAGWSLFVSIFIVIEIT.

The protein belongs to the complex I subunit 6 family.

The protein resides in the mitochondrion membrane. It catalyses the reaction a ubiquinone + NADH + 5 H(+)(in) = a ubiquinol + NAD(+) + 4 H(+)(out). In terms of biological role, core subunit of the mitochondrial membrane respiratory chain NADH dehydrogenase (Complex I) that is believed to belong to the minimal assembly required for catalysis. Complex I functions in the transfer of electrons from NADH to the respiratory chain. The immediate electron acceptor for the enzyme is believed to be ubiquinone. The chain is NADH-ubiquinone oxidoreductase chain 6 (MT-ND6) from Dasypus novemcinctus (Nine-banded armadillo).